We begin with the raw amino-acid sequence, 443 residues long: MTRKLLILSGCLILALNSCKSDMETTPASSVDHTTTQLNGTTIHKLLINGAYTYVNEVNGEYFYADDITITAEQFNQLKRMANPDISTVERSTIVSSFIKTWPNATVYYTLPSQGSLSTQAYNTFLTNINKAFDMISSKTSVKFVQRTNQTEYITFTYSTGNSSPLGWVKNRVNGIKIYNTTYPAIIAHEIMHSMGIMHEQCRPDRDQYIIVDTNRAQDGTRHNFNLYNDYAGHGEFDFGSVMMYKSTDFAIDPNLPVMTKLDGSTFGKQRDGLSAGDYAGINHLYGPVNSTSATNGTYTLTTSLAGDKNIDITGSSTADGTDVILYSATTGNNQKFIFRKSEHGYFTIKSILDSTKVLTVRNNGTANGTAVELRTNADTDAQKWLLFNLGNEGFGFAPKNAPSLRLEVKDGLTTNLTPIVIGSTDQTLQPYTKQRFTLTKVN.

A signal peptide spans Met1–Ala15. The propeptide at Leu16 to Arg91 is activation peptide. The 198-residue stretch at Ser92 to Val289 folds into the Peptidase M12A domain. Position 189 (His189) interacts with Zn(2+). Residue Glu190 is part of the active site. Residues His193 and His199 each contribute to the Zn(2+) site. The Ricin B-type lectin domain occupies Gly297–Thr440. The O-linked (Man...) serine glycan is linked to Ser355.

Zn(2+) serves as cofactor. In terms of processing, O-linked glycan consists of the Man, GlcNAc, GlcU, Glc, GlcU, Rha, Man heptasaccharide.

It carries out the reaction Hydrolyzes polypeptides on the amino-side of Asp in -Xaa-|-Asp-. Acts very slowly on -Xaa-|-Glu.. Functionally, zinc metallendopeptidase that cleaves preferentially on N-terminal side of aspartate-containing substrates. This chain is Flavastacin, found in Elizabethkingia meningoseptica (Chryseobacterium meningosepticum).